The sequence spans 830 residues: Frameshifted structural polyprotein (830 aa).

Residues 58 to 109 are disordered; that stretch reads AIAPARPPKPKKKKTTKPKPKTQPKKINGKTQQQKKKDKQADKKKKKPGKRE. The segment covering 65–107 has biased composition (basic residues); that stretch reads PKPKKKKTTKPKPKTQPKKINGKTQQQKKKDKQADKKKKKPGK. Residues 94 to 106 form a ribosome-binding region; the sequence is KDKQADKKKKKPG. C119 and C134 form a disulfide bridge. In terms of domain architecture, Peptidase S3 spans 119–267; that stretch reads CIFEVKHEGK…RVTPEGSEEW (149 aa). Catalysis depends on charge relay system residues H145, D167, and S219. N-linked (GlcNAc...) asparagine; by host glycosylation is found at N280, N327, N533, and N595. A helical membrane pass occupies residues 702–722; sequence AVVGMSLLALISIFASCYMLV. Residues C718, C728, C748, and C749 are each lipidated (S-palmitoyl cysteine; by host). Residues 728–748 form a transient transmembrane before p62-6K protein processing region; that stretch reads CLTPYALTPGAAVPWTLGILC. 2 helical membrane-spanning segments follow: residues 771 to 791 and 793 to 813; these read ALFW…TYCL and NVLC…RGHR.

In terms of assembly, homodimer. Homomultimer. Interacts with host karyopherin KPNA4; this interaction allows the nuclear import of the viral capsid protein. Precursor of protein E3/E2: The precursor of protein E3/E2 and E1 form a heterodimer shortly after synthesis. Interacts with host IRAK1; the interaction leads to inhibition of IRAK1-dependent signaling. Processing of the precursor of protein E3/E2 into E2 and E3 results in a heterodimer of the spike glycoproteins E2 and E1. Spike at virion surface are constituted of three E2-E1 heterodimers. Interacts with 6K protein. Interacts with host MXRA8; this interaction mediates virus entry. Specific enzymatic cleavages in vivo yield mature proteins. Capsid protein is auto-cleaved during polyprotein translation, unmasking a signal peptide at the N-terminus of the precursor of E3/E2. The remaining polyprotein is then targeted to the host endoplasmic reticulum, where host signal peptidase cleaves it into pE2 and TF. pE2 is further processed to mature E3 and E2 by host furin in trans-Golgi vesicle.

Its subcellular location is the virion. The protein localises to the host cytoplasm. The protein resides in the host cell membrane. It is found in the host nucleus. It localises to the virion membrane. The catalysed reaction is Autocatalytic release of the core protein from the N-terminus of the togavirus structural polyprotein by hydrolysis of a -Trp-|-Ser- bond.. Forms an icosahedral capsid with a T=4 symmetry composed of 240 copies of the capsid protein surrounded by a lipid membrane through which penetrate 80 spikes composed of trimers of E1-E2 heterodimers. The capsid protein binds to the viral RNA genome at a site adjacent to a ribosome binding site for viral genome translation following genome release. Possesses a protease activity that results in its autocatalytic cleavage from the nascent structural protein. Following its self-cleavage, the capsid protein transiently associates with ribosomes, and within several minutes the protein binds to viral RNA and rapidly assembles into icosahedric core particles. The resulting nucleocapsid eventually associates with the cytoplasmic domain of the spike glycoprotein E2 at the cell membrane, leading to budding and formation of mature virions. In case of infection, new virions attach to target cells and after clathrin-mediated endocytosis their membrane fuses with the host endosomal membrane. This leads to the release of the nucleocapsid into the cytoplasm, followed by an uncoating event necessary for the genomic RNA to become accessible. The uncoating might be triggered by the interaction of capsid proteins with ribosomes. Binding of ribosomes would release the genomic RNA since the same region is genomic RNA-binding and ribosome-binding. Specifically inhibits interleukin-1 receptor-associated kinase 1/IRAK1-dependent signaling during viral entry, representing a means by which the alphaviruses may evade innate immune detection and activation prior to viral gene expression. Its function is as follows. Provides the signal sequence for p62 (E3/E2) translocation to the host endoplasmic reticulum. Mediates pH protection of E1 during secretory pathway trans- port. Functionally, plays a role in viral attachment to target host cell, by binding to the cell receptor. Synthesized as a p62 precursor which is processed by furin at the cell membrane just before virion budding, giving rise to E2-E1 heterodimer. The p62-E1 heterodimer is stable, whereas E2-E1 is unstable and dissociate at low pH. p62 is processed at the last step, presumably to avoid E1 fusion activation before its final export to cell surface. E2 C-terminus contains a transitory transmembrane that would be disrupted by palmitoylation, resulting in reorientation of the C-terminal tail from lumenal to cytoplasmic side. This step is critical since E2 C-terminus is involved in budding by interacting with capsid proteins. This release of E2 C-terminus in cytoplasm occurs lately in protein export, and precludes premature assembly of particles at the endoplasmic reticulum membrane. In terms of biological role, virion component that may play a role during viral assembly. This chain is Frameshifted structural polyprotein, found in Aedes (Middle-African hedgehog).